The chain runs to 71 residues: UPF0499 protein ACLA_083080 (71 aa).

Residues 1-18 form the signal peptide; the sequence is MKFLNILTLAFITGMASA. Intrachain disulfides connect C44–C58, C48–C61, and C54–C68.

It belongs to the UPF0499 family.

The protein localises to the secreted. The protein is UPF0499 protein ACLA_083080 of Aspergillus clavatus (strain ATCC 1007 / CBS 513.65 / DSM 816 / NCTC 3887 / NRRL 1 / QM 1276 / 107).